We begin with the raw amino-acid sequence, 152 residues long: MADEYNAEEAAELKKKRTFRKFSYRGVDLDALLDLTSDELRDVVHARARRKINRGLKRRPMGLIKKLRKAKQEAKPNEKPDLVKTHLRDMIVVPEMIGSVVGIYSGKEFNQVEIKPEMVGHYLGEFSISYKPVKHGRPGIGATHSSRFIPLK.

Belongs to the universal ribosomal protein uS19 family.

The protein is Small ribosomal subunit protein uS19 (RPS15) of Podospora anserina (Pleurage anserina).